The primary structure comprises 191 residues: Ureidoglycolate lyase (191 aa).

The protein belongs to the ureidoglycolate lyase family. Homodimer.

The enzyme catalyses (S)-ureidoglycolate = urea + glyoxylate. The protein operates within nitrogen metabolism; (S)-allantoin degradation. Its function is as follows. Catalyzes the catabolism of the allantoin degradation intermediate (S)-ureidoglycolate, generating urea and glyoxylate. Involved in the utilization of allantoin as secondary nitrogen source when primary sources are limiting. The sequence is that of Ureidoglycolate lyase from Schizosaccharomyces pombe (strain 972 / ATCC 24843) (Fission yeast).